The sequence spans 86 residues: MALLITKKCINCDMCEPECPNEAISMGDHIYEINSDKCTECVGHYETPTCQKVCPIPNTIVKDPAHVETEEQLWDKFVLMHHADKI.

4Fe-4S ferredoxin-type domains follow at residues 1-29 (MALL…MGDH) and 31-65 (YEIN…KDPA). [4Fe-4S] cluster contacts are provided by C9, C12, C15, C19, C38, C41, C50, and C54.

[4Fe-4S] cluster is required as a cofactor.

Its function is as follows. Ferredoxins are iron-sulfur proteins that transfer electrons in a wide variety of metabolic reactions. The polypeptide is Ferredoxin YfhL (yfhL) (Escherichia coli (strain K12)).